The primary structure comprises 327 residues: Glycerol-3-phosphate dehydrogenase [NAD(P)+] (327 aa).

Ser-10, Phe-11, Arg-31, and Lys-108 together coordinate NADPH. Positions 108, 136, and 138 each coordinate sn-glycerol 3-phosphate. An NADPH-binding site is contributed by Ala-140. Positions 191, 246, 256, 257, and 258 each coordinate sn-glycerol 3-phosphate. Lys-191 functions as the Proton acceptor in the catalytic mechanism. Arg-257 contributes to the NADPH binding site. Positions 281 and 283 each coordinate NADPH.

Belongs to the NAD-dependent glycerol-3-phosphate dehydrogenase family.

The protein resides in the cytoplasm. The enzyme catalyses sn-glycerol 3-phosphate + NAD(+) = dihydroxyacetone phosphate + NADH + H(+). The catalysed reaction is sn-glycerol 3-phosphate + NADP(+) = dihydroxyacetone phosphate + NADPH + H(+). It participates in membrane lipid metabolism; glycerophospholipid metabolism. In terms of biological role, catalyzes the reduction of the glycolytic intermediate dihydroxyacetone phosphate (DHAP) to sn-glycerol 3-phosphate (G3P), the key precursor for phospholipid synthesis. The polypeptide is Glycerol-3-phosphate dehydrogenase [NAD(P)+] (Ehrlichia ruminantium (strain Gardel)).